We begin with the raw amino-acid sequence, 228 residues long: uncharacterized protein (228 aa).

The first 28 residues, 1-28, serve as a signal peptide directing secretion; the sequence is MRKKRVITCVMAASLTLGSLLPAGYASA.

This is an uncharacterized protein from Bacillus subtilis (strain 168).